An 844-amino-acid polypeptide reads, in one-letter code: NADPH-Fe(3+) oxidoreductase subunit alpha (844 aa).

The region spanning 1 to 78 (MVSLTIDGKD…GIKVTTQSEK (78 aa)) is the 2Fe-2S ferredoxin-type domain. Residues cysteine 34, cysteine 45, cysteine 48, and cysteine 62 each contribute to the [2Fe-2S] cluster site. One can recognise a 4Fe-4S His(Cys)3-ligated-type domain in the interval 78–117 (KLSRIRQKIMELMLVNHPLDCPVCDAGGECDLQNACYGLG). 15 residues coordinate [4Fe-4S] cluster: histidine 94, cysteine 98, cysteine 101, cysteine 107, cysteine 146, cysteine 149, cysteine 152, cysteine 186, cysteine 189, cysteine 192, cysteine 196, cysteine 222, cysteine 225, cysteine 229, and cysteine 256. 2 4Fe-4S ferredoxin-type domains span residues 137–168 (PLIE…IRVV) and 177–206 (DTVD…SKPF). The 4Fe-4S Mo/W bis-MGD-type domain maps to 215–270 (FTTTPSVCPFCATGCQIEYHSRNGRVERVTSDDSTYNSGNLCINGRFGYSYINSPD).

As to quaternary structure, heterotetramer with 2 beta subunits. Requires [4Fe-4S] cluster as cofactor.

The protein localises to the cell inner membrane. Its activity is regulated as follows. Not regulated by FAD or FMN. Its function is as follows. The SfrAB enzymatic complex is probably involved in acetate metabolism and does not participate directly in the reduction of Fe(3+) chelates. May serve as a major route for NADP regeneration. This Geobacter sulfurreducens (strain DL-1 / KN400) protein is NADPH-Fe(3+) oxidoreductase subunit alpha (sfrA).